Consider the following 3332-residue polypeptide: Nonribosomal peptide synthetase imqB (3332 aa).

The interval 230–622 (FSEQVKAHPG…IGRKDTQVKV (393 aa)) is adenylation 1. Residues 764–846 (GRITPQEKLL…DMARCITRVD (83 aa)) form the Carrier 1 domain. Residue Ser-801 is modified to O-(pantetheine 4'-phosphoryl)serine. A condensation 1 region spans residues 886–1314 (DIYPCTPLQE…NCLTRKELHQ (429 aa)). Positions 1336–1740 (EVSNTRPTAP…GRKDRQLKVR (405 aa)) are adenylation 2. Residues 1880-1954 (AIATPKEEKL…EMAEKAAETG (75 aa)) form the Carrier 2 domain. O-(pantetheine 4'-phosphoryl)serine is present on Ser-1915. The condensation 2 stretch occupies residues 1992-2402 (EDIYPCTPLQ…CLSEIDTQQI (411 aa)). The adenylation 3 stretch occupies residues 2422–2819 (AQQAREHPAT…GRKDTQVKIR (398 aa)). One can recognise a Carrier 3 domain in the interval 2963-3039 (EVATNDEAAV…DLASRIGRVE (77 aa)). Ser-3000 is subject to O-(pantetheine 4'-phosphoryl)serine. The segment at 3058 to 3323 (SSNPTLIQGQ…ETTRHIRDFC (266 aa)) is thioesterase (TE) domain.

Belongs to the NRP synthetase family.

It participates in secondary metabolite biosynthesis. Its function is as follows. Nonribosomal peptide synthetase; part of the gene cluster that mediates the biosynthesis of imizoquins A to D, tripeptide-derived alkaloids that serve a protective role against oxidative stress that are essential for normal germination. ImqB is a canonical three-module NRPS that assembles the tripeptide backbone of the imizoquins via condensation of Trp, Tyr, and Leu-derived precursors. N-methylation by imqF and phenol oxidation by imqC, followed by cyclization via the FAD-dependent oxidase imqH carry out the three-step transformation of L-tyrosine into tetrahydroisoquinoline. Importantly, this sequence requires the presence of a free amine in the tyrosine moiety, indicating that isoquinoline formation occurs prior to peptide bond formation. The imidazolidin-4-one ring of imizoquins could form following additional oxidation of the methyl-derived bridgehead carbon by imqH. Lastly, O-methylation by imqG and leucine hydroxylation by imqE complete biosynthesis of the imizoquins. The protein is Nonribosomal peptide synthetase imqB of Aspergillus flavus (strain ATCC 200026 / FGSC A1120 / IAM 13836 / NRRL 3357 / JCM 12722 / SRRC 167).